Consider the following 225-residue polypeptide: UPF0173 metal-dependent hydrolase Fjoh_2786 (225 aa).

The protein belongs to the UPF0173 family.

In Flavobacterium johnsoniae (strain ATCC 17061 / DSM 2064 / JCM 8514 / BCRC 14874 / CCUG 350202 / NBRC 14942 / NCIMB 11054 / UW101) (Cytophaga johnsonae), this protein is UPF0173 metal-dependent hydrolase Fjoh_2786.